The following is a 668-amino-acid chain: MSTTVPPEIEEHTRTLRALLHRWGYAYYVLDAPEVSDAIYDQHYRELVDLESRYPELVSPDSPTRRVGERPASAFVSVTHRVPMFSLENAFSQAELEKWGERLLRAIGPGLEFICELKIDGSATALSYEDGVLVRGATRGDGVEGEEITQNLRTIRAIPLKLLGGEVPAVLEVRGEAFIPRDEFERINQERQAAGEKLFANPRNACAGTLRQLDSRVVASRRLGFFAYTAHYGRAESQWEALAELESHGFRVNPHRSLCRDLAEVRTFCEHWENHRHELPYDTDGVVVKVNAFDHQREVGFTSKFPRWAIAFKYPAEEKSTVVEAIAVQVGRTGALTPVAELQPVAVAGTTVSRATLHNQDRIESLDVRVGDTVIIRKAGEIIPEVVRVIGELRPPEAVPYVFPQTCPECGTAVVRAPGEAAVRCPNPRCPALIRGKLGHWCAALEIDGIGDKLIARLVSLGLVHTVADLYELSAEQLAGLERLGARSAAKIVEQLDRSHRQPWSRVLYGLGLRHIGASVSVELARAFASADALARADLAAIASLYGFGEELARSVVEWFAQAENRALLERLKAHGLQLAGGGRAAQSSALAGLTFVITGTLPTLSREECTALIESHGGKVTSSVSSRTSYVVAGEKAGSKLARAQDLKVAVLDEEQLRALIETREMP.

NAD(+) contacts are provided by residues 37 to 41 (DAIYD), 86 to 87 (SL), and Glu116. Lys118 serves as the catalytic N6-AMP-lysine intermediate. Residues Arg139, Glu176, Lys289, and Lys313 each contribute to the NAD(+) site. The Zn(2+) site is built by Cys407, Cys410, Cys425, and Cys430. Residues 586–668 (AQSSALAGLT…RALIETREMP (83 aa)) form the BRCT domain.

It belongs to the NAD-dependent DNA ligase family. LigA subfamily. Mg(2+) is required as a cofactor. Requires Mn(2+) as cofactor.

The enzyme catalyses NAD(+) + (deoxyribonucleotide)n-3'-hydroxyl + 5'-phospho-(deoxyribonucleotide)m = (deoxyribonucleotide)n+m + AMP + beta-nicotinamide D-nucleotide.. DNA ligase that catalyzes the formation of phosphodiester linkages between 5'-phosphoryl and 3'-hydroxyl groups in double-stranded DNA using NAD as a coenzyme and as the energy source for the reaction. It is essential for DNA replication and repair of damaged DNA. The polypeptide is DNA ligase (Gloeobacter violaceus (strain ATCC 29082 / PCC 7421)).